A 275-amino-acid polypeptide reads, in one-letter code: Phosphonates import ATP-binding protein PhnC (275 aa).

The 245-residue stretch at 2 to 246 (LKIENLTKRY…ALTEIYGEEE (245 aa)) folds into the ABC transporter domain. Residue 35–42 (GPSGAGKS) coordinates ATP.

It belongs to the ABC transporter superfamily. Phosphonates importer (TC 3.A.1.9.1) family. In terms of assembly, the complex is composed of two ATP-binding proteins (PhnC), two transmembrane proteins (PhnE) and a solute-binding protein (PhnD).

The protein resides in the cell inner membrane. The catalysed reaction is phosphonate(out) + ATP + H2O = phosphonate(in) + ADP + phosphate + H(+). In terms of biological role, part of the ABC transporter complex PhnCDE involved in phosphonates import. Responsible for energy coupling to the transport system. This is Phosphonates import ATP-binding protein PhnC from Wolinella succinogenes (strain ATCC 29543 / DSM 1740 / CCUG 13145 / JCM 31913 / LMG 7466 / NCTC 11488 / FDC 602W) (Vibrio succinogenes).